The chain runs to 339 residues: Phosphoribosylformylglycinamidine cyclo-ligase (339 aa).

Belongs to the AIR synthase family.

The protein resides in the cytoplasm. The catalysed reaction is 2-formamido-N(1)-(5-O-phospho-beta-D-ribosyl)acetamidine + ATP = 5-amino-1-(5-phospho-beta-D-ribosyl)imidazole + ADP + phosphate + H(+). It functions in the pathway purine metabolism; IMP biosynthesis via de novo pathway; 5-amino-1-(5-phospho-D-ribosyl)imidazole from N(2)-formyl-N(1)-(5-phospho-D-ribosyl)glycinamide: step 2/2. This Streptococcus thermophilus (strain ATCC BAA-491 / LMD-9) protein is Phosphoribosylformylglycinamidine cyclo-ligase.